The following is a 277-amino-acid chain: Nickel import ATP-binding protein NikE (277 aa).

An ABC transporter domain is found at 14–253; the sequence is YRTVSLVGRS…EHPASRALQR (240 aa). 46-53 serves as a coordination point for ATP; the sequence is GRSGSGKS.

It belongs to the ABC transporter superfamily. Nickel importer (TC 3.A.1.5.3) family. The complex is composed of two ATP-binding proteins (NikD and NikE), two transmembrane proteins (NikB and NikC) and a solute-binding protein (NikA).

Its subcellular location is the cell inner membrane. It carries out the reaction Ni(2+)(out) + ATP + H2O = Ni(2+)(in) + ADP + phosphate + H(+). In terms of biological role, part of the ABC transporter complex NikABCDE involved in nickel import. Responsible for energy coupling to the transport system. The sequence is that of Nickel import ATP-binding protein NikE from Rhodospirillum rubrum (strain ATCC 11170 / ATH 1.1.1 / DSM 467 / LMG 4362 / NCIMB 8255 / S1).